The following is an 878-amino-acid chain: Interleukin-3 receptor class 2 subunit beta (878 aa).

The N-terminal stretch at Met1–Gly22 is a signal peptide. Topologically, residues His23–Trp440 are extracellular. A disulfide bond links Cys39 and Cys49. The N-linked (GlcNAc...) asparagine glycan is linked to Asn62. The cysteines at positions 78 and 95 are disulfide-linked. Residues Pro139–Gly244 enclose the Fibronectin type-III 1 domain. The tract at residues Gly223 to Gly244 is disordered. 2 cysteine pairs are disulfide-bonded: Cys254-Cys264 and Cys293-Cys310. The region spanning Gln343–Thr438 is the Fibronectin type-III 2 domain. Asn350 is a glycosylation site (N-linked (GlcNAc...) asparagine). The WSXWS motif signature appears at Trp427–Ser431. Residues Val441 to Leu462 form a helical membrane-spanning segment. Topologically, residues His463–Tyr878 are cytoplasmic. Residues Trp476–Ser484 carry the Box 1 motif motif. Disordered stretches follow at residues Leu539 to Leu620 and Ser660 to Asp709. Polar residues predominate over residues Pro554–Asn570. The span at Glu671 to Asp689 shows a compositional bias: basic and acidic residues. 2 positions are modified to phosphoserine: Ser752 and Ser754. Tyr765 carries the phosphotyrosine modification. Disordered regions lie at residues Ser771–Glu810 and Pro829–Asp849.

It belongs to the type I cytokine receptor family. Type 4 subfamily. In terms of assembly, heterodimer of an alpha and a beta subunit.

The protein resides in the membrane. In terms of biological role, in mouse, there are two classes of high-affinity IL3 receptors. One contains this IL3-specific beta subunit and the other contains the beta subunit also shared by high-affinity IL5 and GM-CSF receptors. This chain is Interleukin-3 receptor class 2 subunit beta (Csf2rb2), found in Mus musculus (Mouse).